We begin with the raw amino-acid sequence, 315 residues long: Beta-carotene hydroxylase 1, chloroplastic (315 aa).

A chloroplast-targeting transit peptide spans 1–58 (MAAEISISASSRAICLQRNPFPAPKYFATAPPLLFFSPLTCNLDAILRSRRKPRLAAC). 2 consecutive transmembrane segments (helical) span residues 112–132 (YLVA…ISVY) and 146–166 (FSEM…MEYW). In terms of domain architecture, Fatty acid hydroxylase spans 159 to 286 (AAIGMEYWAR…KFDGVPYGLF (128 aa)). The Histidine box-1 signature appears at 171–176 (HRALWH). Residues 183–187 (HESHH) carry the Histidine box-2 motif. Transmembrane regions (helical) follow at residues 196-216 (LNDI…SFGF) and 222-242 (IPGL…AYMF). The Histidine box-3 motif lies at 244-249 (HDGLVH). The Histidine box-4 signature appears at 270–274 (HQLHH).

The protein belongs to the sterol desaturase family.

Its subcellular location is the plastid. It localises to the chloroplast membrane. The catalysed reaction is all-trans-beta-carotene + 4 reduced [2Fe-2S]-[ferredoxin] + 2 O2 + 4 H(+) = all-trans-zeaxanthin + 4 oxidized [2Fe-2S]-[ferredoxin] + 2 H2O. It catalyses the reaction all-trans-beta-carotene + 2 reduced [2Fe-2S]-[ferredoxin] + O2 + 2 H(+) = beta-cryptoxanthin + 2 oxidized [2Fe-2S]-[ferredoxin] + H2O. It carries out the reaction beta-cryptoxanthin + 2 reduced [2Fe-2S]-[ferredoxin] + O2 + 2 H(+) = all-trans-zeaxanthin + 2 oxidized [2Fe-2S]-[ferredoxin] + H2O. Its activity is regulated as follows. Inhibited by o-phenanthroline and 8-hydroxyquinoline. Functionally, nonheme diiron monooxygenase involved in the biosynthesis of xanthophylls. Specific for beta-ring hydroxylations of beta-carotene. Produces beta-cryptoxanthin and zeaxanthin. Uses ferredoxin as an electron donor. The polypeptide is Beta-carotene hydroxylase 1, chloroplastic (Capsicum annuum (Capsicum pepper)).